A 392-amino-acid polypeptide reads, in one-letter code: 5-azacytidine-induced protein 2 (392 aa).

Positions 1-197 (MDALVEDDIC…IELQKAKQTD (197 aa)) are homodimerization. Coiled-coil stretches lie at residues 40–76 (ALVT…LIAR) and 102–196 (DRDN…AKQT). The interaction with TBK1 and IKBKE stretch occupies residues 216–257 (SDNMQHAYWELKREMSNLHLVTQVQAELLRKLKTSTAIKKAC). 2 positions are modified to phosphoserine: Ser318 and Ser353.

Homodimer. Interacts with IKBKE. Interacts with TBK1. Interacts with TICAM1. Interacts with TAX1BP1. Interacts with CALCOCO2. As to quaternary structure, (Microbial infection) Interacts with vaccinia virus protein C6. Ubiquitinated via 'Lys-48'-linked polyubiquitination by TRIM38, leading to its degradation. In terms of tissue distribution, widely expressed. Abundant expression seen in the pancreas and testis.

The protein resides in the cytoplasm. Its function is as follows. Adapter protein which binds TBK1 and IKBKE playing a role in antiviral innate immunity. Activates serine/threonine-protein kinase TBK1 and facilitates its oligomerization. Enhances the phosphorylation of NF-kappa-B p65 subunit RELA by TBK1. Promotes TBK1-induced as well as TNF-alpha or PMA-induced activation of NF-kappa-B. Participates in IFNB promoter activation via TICAM1. This chain is 5-azacytidine-induced protein 2 (AZI2), found in Homo sapiens (Human).